The following is a 93-amino-acid chain: MSSTFDKVADIIAETSEIDRDTITPESHTIDDLGIDSLDFLDIVFAIDKAFGIKIPLEQWTQEVNEGKVPTEEYFVLKNLCAKIDELVAAKKG.

The 87-residue stretch at 2–88 (SSTFDKVADI…NLCAKIDELV (87 aa)) folds into the Carrier domain. O-(pantetheine 4'-phosphoryl)serine is present on Ser-37.

In terms of processing, 4'-phosphopantetheine is transferred from CoA to a specific serine of apo-ACP by AcpS. This modification is essential for activity because fatty acids are bound in thioester linkage to the sulfhydryl of the prosthetic group.

It is found in the cytoplasm. The protein operates within glycolipid biosynthesis; KDO(2)-lipid A biosynthesis. Carrier of the growing fatty acid chain in fatty acid biosynthesis. Is involved in the transfer of long hydroxylated fatty acids to lipid A. The protein is Acyl carrier protein AcpXL (acpXL) of Brucella melitensis biotype 1 (strain ATCC 23456 / CCUG 17765 / NCTC 10094 / 16M).